An 805-amino-acid polypeptide reads, in one-letter code: Sucrose synthase (805 aa).

Positions 275–752 are GT-B glycosyltransferase; sequence MVFNVVILSP…GLQRIEEKYT (478 aa).

It belongs to the glycosyltransferase 1 family. Plant sucrose synthase subfamily.

It carries out the reaction an NDP-alpha-D-glucose + D-fructose = a ribonucleoside 5'-diphosphate + sucrose + H(+). In terms of biological role, sucrose-cleaving enzyme that provides UDP-glucose and fructose for various metabolic pathways. In Medicago sativa (Alfalfa), this protein is Sucrose synthase.